The primary structure comprises 960 residues: FYVE, RhoGEF and PH domain-containing protein 1 (960 aa).

Disordered stretches follow at residues 1 to 210 and 226 to 355; these read MHGH…SSAA and ASDR…REIP. Position 48 is a phosphoserine (serine 48). The segment covering 125-135 has biased composition (basic and acidic residues); it reads PHPEGPQRLRS. Composition is skewed to pro residues over residues 137 to 149, 156 to 165, and 173 to 190; these read PGPP…PRPS, GPKPQVPPKP, and VLPP…PLPA. An SH3-binding motif is present at residues 171–187; it reads PRVLPPPEPIPPPPSRP. Serine 205 is subject to Phosphoserine. Residues 231–251 show a composition bias toward pro residues; sequence APGPCPVPPEPAMLPQPPPQP. The span at 273 to 284 shows a compositional bias: basic and acidic residues; the sequence is RDGEKVPNRDSG. Low complexity predominate over residues 285–294; that stretch reads IDSISSPSNS. A compositionally biased stretch (acidic residues) spans 335-350; sequence VDSDLEEEEEEEEEEK. The DH domain occupies 372 to 560; it reads KVFHIANELL…ATAAEHSNAA (189 aa). The 100-residue stretch at 589-688 folds into the PH 1 domain; that stretch reads ELIKEGHILK…WVQAINSTLL (100 aa). The tract at residues 701 to 725 is disordered; it reads NSTNRDDEDTPPNSPNVDLGKRAPT. A Phosphothreonine modification is found at threonine 710. Serine 714 carries the post-translational modification Phosphoserine. The segment at 729–789 adopts an FYVE-type zinc-finger fold; the sequence is EKEVTMCMRC…VCTDCYVALH (61 aa). Zn(2+) is bound by residues cysteine 735, cysteine 738, cysteine 752, cysteine 755, cysteine 760, cysteine 763, cysteine 781, and cysteine 784. The PH 2 domain occupies 820–920; sequence NSVICSFLHY…WMAVLGRAGR (101 aa). The interval 922-960 is disordered; sequence DTFCPGPTLSEDKEMEETPVAASGATAEPPEASQTRDKT.

Interacts with DBNL/ABP1 and CTTN. Binds CDC42. May interact with CCPG1.

It is found in the cytoplasm. Its subcellular location is the cell projection. The protein resides in the lamellipodium. The protein localises to the ruffle. It localises to the cytoskeleton. In terms of biological role, activates CDC42, a member of the Ras-like family of Rho- and Rac proteins, by exchanging bound GDP for free GTP. Plays a role in regulating the actin cytoskeleton and cell shape. This is FYVE, RhoGEF and PH domain-containing protein 1 (Fgd1) from Mus musculus (Mouse).